We begin with the raw amino-acid sequence, 356 residues long: Dynein regulatory complex protein 10 (356 aa).

A coiled-coil region spans residues 126-167; that stretch reads SNREFFEEVRDREERAVAEQEQLKQKLKLQRVELQKAAGTIQ. The disordered stretch occupies residues 173 to 209; that stretch reads ARGEVSEVQSSTQQSRAAIEGSARAQSEADKSSFQSD. A compositionally biased stretch (low complexity) spans 178 to 187; it reads SEVQSSTQQS. Residues 197–287 adopt a coiled-coil conformation; it reads AQSEADKSSF…LRQLQEYNSG (91 aa). The IQ domain occupies 319 to 348; sequence QNHAARVIQSYWRGFKKAREAAKKKAKKLE.

This sequence belongs to the DRC10 family. Component of the nexin-dynein regulatory complex (N-DRC).

It is found in the cytoplasm. The protein localises to the cytoskeleton. It localises to the flagellum axoneme. Functionally, component of the nexin-dynein regulatory complex (N-DRC), a key regulator of ciliary/flagellar motility which maintains the alignment and integrity of the distal axoneme and regulates microtubule sliding in motile axonemes. This Chlamydomonas reinhardtii (Chlamydomonas smithii) protein is Dynein regulatory complex protein 10.